Consider the following 132-residue polypeptide: Small ribosomal subunit protein uS8 (132 aa).

The protein belongs to the universal ribosomal protein uS8 family. As to quaternary structure, part of the 30S ribosomal subunit. Contacts proteins S5 and S12.

In terms of biological role, one of the primary rRNA binding proteins, it binds directly to 16S rRNA central domain where it helps coordinate assembly of the platform of the 30S subunit. The polypeptide is Small ribosomal subunit protein uS8 (Lysinibacillus sphaericus (strain C3-41)).